We begin with the raw amino-acid sequence, 490 residues long: Glutamyl-tRNA(Gln) amidotransferase subunit A (490 aa).

Residues Lys-81 and Ser-156 each act as charge relay system in the active site. The Acyl-ester intermediate role is filled by Ser-180.

This sequence belongs to the amidase family. GatA subfamily. In terms of assembly, heterotrimer of A, B and C subunits.

The enzyme catalyses L-glutamyl-tRNA(Gln) + L-glutamine + ATP + H2O = L-glutaminyl-tRNA(Gln) + L-glutamate + ADP + phosphate + H(+). Functionally, allows the formation of correctly charged Gln-tRNA(Gln) through the transamidation of misacylated Glu-tRNA(Gln) in organisms which lack glutaminyl-tRNA synthetase. The reaction takes place in the presence of glutamine and ATP through an activated gamma-phospho-Glu-tRNA(Gln). This chain is Glutamyl-tRNA(Gln) amidotransferase subunit A, found in Nocardia farcinica (strain IFM 10152).